The sequence spans 183 residues: 2-C-methyl-D-erythritol 2,4-cyclodiphosphate synthase (183 aa).

Positions 10 and 12 each coordinate a divalent metal cation. 4-CDP-2-C-methyl-D-erythritol 2-phosphate-binding positions include 10–12 and 38–39; these read DVH and HS. His-46 lines the a divalent metal cation pocket. Residues 60 to 62 and 65 to 69 each bind 4-CDP-2-C-methyl-D-erythritol 2-phosphate; these read DIG and FPDTD.

It belongs to the IspF family. As to quaternary structure, homotrimer. A divalent metal cation serves as cofactor.

It carries out the reaction 4-CDP-2-C-methyl-D-erythritol 2-phosphate = 2-C-methyl-D-erythritol 2,4-cyclic diphosphate + CMP. It functions in the pathway isoprenoid biosynthesis; isopentenyl diphosphate biosynthesis via DXP pathway; isopentenyl diphosphate from 1-deoxy-D-xylulose 5-phosphate: step 4/6. Functionally, involved in the biosynthesis of isopentenyl diphosphate (IPP) and dimethylallyl diphosphate (DMAPP), two major building blocks of isoprenoid compounds. Catalyzes the conversion of 4-diphosphocytidyl-2-C-methyl-D-erythritol 2-phosphate (CDP-ME2P) to 2-C-methyl-D-erythritol 2,4-cyclodiphosphate (ME-CPP) with a corresponding release of cytidine 5-monophosphate (CMP). The sequence is that of 2-C-methyl-D-erythritol 2,4-cyclodiphosphate synthase from Verminephrobacter eiseniae (strain EF01-2).